The sequence spans 123 residues: MSVKIFGKGKKAALKRRHARIRKRISGTAERPRLVVTRSNRHMVAQIVDDNAGKTLVSESTLMADFADFQGTKTEAAKKVGELLAKKAKDAGITTVVFDRGGNMYHGRVAAVAEGAREGGLAL.

Belongs to the universal ribosomal protein uL18 family. As to quaternary structure, part of the 50S ribosomal subunit; part of the 5S rRNA/L5/L18/L25 subcomplex. Contacts the 5S and 23S rRNAs.

In terms of biological role, this is one of the proteins that bind and probably mediate the attachment of the 5S RNA into the large ribosomal subunit, where it forms part of the central protuberance. The sequence is that of Large ribosomal subunit protein uL18 from Bifidobacterium animalis subsp. lactis (strain AD011).